A 242-amino-acid chain; its full sequence is N-glycosylase/DNA lyase (242 aa).

8-oxoguanine-binding residues include glutamine 26, serine 53, and tryptophan 64. Residues glutamate 120–serine 184 form a helix-hairpin-helix region. Lysine 144 acts as the Schiff-base intermediate with DNA in catalysis. 8-oxoguanine-binding residues include phenylalanine 148 and proline 174. Residue aspartate 176 is part of the active site. 8-oxoguanine contacts are provided by aspartate 210 and tryptophan 214.

It belongs to the archaeal N-glycosylase/DNA lyase (AGOG) family.

It carries out the reaction 2'-deoxyribonucleotide-(2'-deoxyribose 5'-phosphate)-2'-deoxyribonucleotide-DNA = a 3'-end 2'-deoxyribonucleotide-(2,3-dehydro-2,3-deoxyribose 5'-phosphate)-DNA + a 5'-end 5'-phospho-2'-deoxyribonucleoside-DNA + H(+). Functionally, DNA repair enzyme that is part of the base excision repair (BER) pathway; protects from oxidative damage by removing the major product of DNA oxidation, 8-oxoguanine (GO), from single- and double-stranded DNA substrates. The chain is N-glycosylase/DNA lyase from Pyrococcus furiosus (strain ATCC 43587 / DSM 3638 / JCM 8422 / Vc1).